An 894-amino-acid polypeptide reads, in one-letter code: Exocyst complex component 2 (894 aa).

The IPT/TIG domain maps to 5-89; that stretch reads PVVTGLSPKE…GTSTVQFRAY (85 aa). Positions 398-413 are enriched in basic and acidic residues; that stretch reads HTSKDSGAQEKAKNRD. The segment at 398–417 is disordered; that stretch reads HTSKDSGAQEKAKNRDSSQA.

This sequence belongs to the SEC5 family. In terms of assembly, the exocyst complex is composed of Sec3/Exoc1, Sec5/Exoc2, Sec6/Exoc3, Sec8/Exoc4, Sec10/Exoc5, Sec15/Exoc6, Exo70/Exoc7 and Exo84/Exoc8.

In terms of biological role, component of the exocyst complex involved in the docking of exocytic vesicles with fusion sites on the plasma membrane. The polypeptide is Exocyst complex component 2 (Drosophila melanogaster (Fruit fly)).